The following is a 633-amino-acid chain: Chaperone protein dnaK2 (633 aa).

Residue T197 is modified to Phosphothreonine; by autocatalysis. Positions 513–532 are enriched in basic and acidic residues; that stretch reads AEQNASSDKERREKIERKNQ. Disordered stretches follow at residues 513–534 and 598–633; these read AEQN…NQAD and QQAG…TETK. A compositionally biased stretch (low complexity) spans 606 to 619; it reads PGAAPQDGGTTSSD. A compositionally biased stretch (acidic residues) spans 620 to 633; sequence GGDDVIDADFTETK.

It belongs to the heat shock protein 70 family.

Its function is as follows. Acts as a chaperone. The protein is Chaperone protein dnaK2 (dnaK2) of Nostoc sp. (strain PCC 7120 / SAG 25.82 / UTEX 2576).